A 410-amino-acid chain; its full sequence is ORC1-type DNA replication protein 2 (410 aa).

ATP is bound by residues 60–65 (GIGKTT), Y213, and R225.

This sequence belongs to the CDC6/cdc18 family.

Involved in regulation of DNA replication. Binds DNA. The sequence is that of ORC1-type DNA replication protein 2 (orc2) from Aeropyrum pernix (strain ATCC 700893 / DSM 11879 / JCM 9820 / NBRC 100138 / K1).